The primary structure comprises 349 residues: Short chain dehydrogenase/reductase dpfgH (349 aa).

A helical membrane pass occupies residues 9–31 (LCIRVVDSLYGSFLYLPLAILFL). Residues isoleucine 65, arginine 89, and aspartate 115 each contribute to the NADP(+) site. N-linked (GlcNAc...) asparagine glycosylation occurs at asparagine 118. NADP(+)-binding residues include asparagine 142 and lysine 164. Catalysis depends on proton donor residues serine 191 and serine 192. NADP(+) is bound by residues tyrosine 223 and lysine 227. Catalysis depends on tyrosine 223, which acts as the Proton acceptor. Lysine 227 functions as the Lowers pKa of active site Tyr in the catalytic mechanism. A glycan (N-linked (GlcNAc...) asparagine) is linked at asparagine 334.

The protein belongs to the short-chain dehydrogenases/reductases (SDR) family.

It localises to the membrane. The protein operates within secondary metabolite biosynthesis; terpenoid biosynthesis. In terms of biological role, short chain dehydrogenase/reductase; part of the gene cluster that mediates the biosynthesis of diterpenoid pyrones. The first step of the pathway is the synthesis of the alpha-pyrone moiety by the polyketide synthase dpfgA via condensation of one acetyl-CoA starter unit with 3 malonyl-CoA units and 2 methylations. The alpha-pyrone is then combined with geranylgeranyl pyrophosphate (GGPP) formed by the GGPP synthase dpfgD through the action of the prenyltransferase dpfgC to yield a linear alpha-pyrone diterpenoid. Subsequent steps in the diterpenoid pyrone biosynthetic pathway involve the decalin core formation, which is initiated by the epoxidation of the C10-C11 olefin by the FAD-dependent oxidoreductase dpfgE, and is followed by a cyclization cascade catalyzed by the terpene cyclase dpfgB. The short chain dehydrogenase/reductase dpfgG then oxidizes the 8S hydroxy group to a ketone and the short chain dehydrogenase/reductase dpfgH reduces the ketone to the 8R hydroxy group to yield higginsianin B. Higginsianin B is further methylated by the methyltransferase dpfgI to produce the intermediate named FDDP B. The cytochrome P450 monooxygenase dfgpJ then catalyzes a three-step oxidation at C-27 to generate a carboxylic acid as well as C-26 hydroxylation. Finally, methyltransferase dpfgK methylates the carboxylic acid generated by dpfgJ, yielding the final diterpenoid pyrones from the pathway which were named FDDP D and FDDP E. This is Short chain dehydrogenase/reductase dpfgH from Gibberella zeae (strain ATCC MYA-4620 / CBS 123657 / FGSC 9075 / NRRL 31084 / PH-1) (Wheat head blight fungus).